The sequence spans 229 residues: Cytidylate kinase (229 aa).

Residue 12–20 (GPSGAGKGT) participates in ATP binding.

The protein belongs to the cytidylate kinase family. Type 1 subfamily.

The protein localises to the cytoplasm. The enzyme catalyses CMP + ATP = CDP + ADP. The catalysed reaction is dCMP + ATP = dCDP + ADP. This Pseudomonas aeruginosa (strain UCBPP-PA14) protein is Cytidylate kinase.